Reading from the N-terminus, the 954-residue chain is Isoleucine--tRNA ligase (954 aa).

The short motif at 60-70 (PYANGALHMGH) is the 'HIGH' region element. Position 564 (glutamate 564) interacts with L-isoleucyl-5'-AMP. Positions 605–609 (KMSKS) match the 'KMSKS' region motif. Lysine 608 serves as a coordination point for ATP. Zn(2+)-binding residues include cysteine 923, cysteine 926, cysteine 943, and cysteine 946.

It belongs to the class-I aminoacyl-tRNA synthetase family. IleS type 1 subfamily. In terms of assembly, monomer. Zn(2+) is required as a cofactor.

It is found in the cytoplasm. It carries out the reaction tRNA(Ile) + L-isoleucine + ATP = L-isoleucyl-tRNA(Ile) + AMP + diphosphate. Catalyzes the attachment of isoleucine to tRNA(Ile). As IleRS can inadvertently accommodate and process structurally similar amino acids such as valine, to avoid such errors it has two additional distinct tRNA(Ile)-dependent editing activities. One activity is designated as 'pretransfer' editing and involves the hydrolysis of activated Val-AMP. The other activity is designated 'posttransfer' editing and involves deacylation of mischarged Val-tRNA(Ile). In Synechococcus sp. (strain ATCC 27144 / PCC 6301 / SAUG 1402/1) (Anacystis nidulans), this protein is Isoleucine--tRNA ligase.